We begin with the raw amino-acid sequence, 598 residues long: Elongation factor 4 (598 aa).

Positions 2–184 (KQIRNFSIIA…RLVKEIPAPE (183 aa)) constitute a tr-type G domain. Residues 14-19 (DHGKST) and 131-134 (NKID) each bind GTP.

It belongs to the TRAFAC class translation factor GTPase superfamily. Classic translation factor GTPase family. LepA subfamily.

The protein localises to the cell inner membrane. The catalysed reaction is GTP + H2O = GDP + phosphate + H(+). In terms of biological role, required for accurate and efficient protein synthesis under certain stress conditions. May act as a fidelity factor of the translation reaction, by catalyzing a one-codon backward translocation of tRNAs on improperly translocated ribosomes. Back-translocation proceeds from a post-translocation (POST) complex to a pre-translocation (PRE) complex, thus giving elongation factor G a second chance to translocate the tRNAs correctly. Binds to ribosomes in a GTP-dependent manner. The protein is Elongation factor 4 of Photorhabdus laumondii subsp. laumondii (strain DSM 15139 / CIP 105565 / TT01) (Photorhabdus luminescens subsp. laumondii).